The sequence spans 165 residues: Neurotrophin-3 (165 aa).

The N-terminal stretch at 1–3 (IQS) is a signal peptide. Positions 4 to 119 (TSMDQGSLSE…VLNQTSRRKR (116 aa)) are excised as a propeptide. Asparagine 112 is a glycosylation site (N-linked (GlcNAc...) asparagine).

Belongs to the NGF-beta family.

It localises to the secreted. Its function is as follows. Seems to promote the survival of visceral and proprioceptive sensory neurons. This Morelia spilota (Carpet python) protein is Neurotrophin-3 (NTF3).